A 71-amino-acid polypeptide reads, in one-letter code: Large ribosomal subunit protein bL31 (71 aa).

Zn(2+) contacts are provided by cysteine 16, cysteine 18, cysteine 37, and cysteine 40.

Belongs to the bacterial ribosomal protein bL31 family. Type A subfamily. Part of the 50S ribosomal subunit. Zn(2+) serves as cofactor.

Functionally, binds the 23S rRNA. The sequence is that of Large ribosomal subunit protein bL31 from Aeromonas salmonicida (strain A449).